The following is a 512-amino-acid chain: MKTTNKIIILDFGSQYTQLIARRIRDLEVYCEVWPYNTALEKIKTTSMKGIILSGGPASVYEEDAFLIDKQLFELKVPVLGICYGMQIISHLHEGTVQRATKQEFGFSELIIDNQEDLFANIPVKSQVWMSHADYIEGMPTNFIQIAHSENSISAIKHSEKKIYGLQFHPEVTHTLIGQQLLSNFVFNICGCQPKWKITEFISAAITEIKNKVGTDNVVLALSGGVDSSVCAVLLHKAIGKQLTCIFVDTGLLRQNSGWNDLQKFQEKFKLNIIKINAQERFLTALKGVTNPEEKRKIIGNLFIEIFNEEAIKIQNVKWLGQGTIYPDVIESVSVKGPSATIKSHHNVGGLPKDLPFQLIEPLRELFKDEVRRTGEALGIDFKFVYKHPFPGPGLAVRIIGEITAEKIALLQAADQIFIDELYQANLYDQVAQAFVVLLPVQSVGVMGDVRTYGYTAVVRSVDTTDFMTANWSRLPFELLEKVSARIVSEVHGINRITYDITSKPPGTIEWE.

The Glutamine amidotransferase type-1 domain maps to 6–195; the sequence is KIIILDFGSQ…VFNICGCQPK (190 aa). The active-site Nucleophile is cysteine 83. Catalysis depends on residues histidine 169 and glutamate 171. Residues 196–387 form the GMPS ATP-PPase domain; the sequence is WKITEFISAA…LGIDFKFVYK (192 aa). 223–229 is an ATP binding site; that stretch reads SGGVDSS.

As to quaternary structure, homodimer.

The catalysed reaction is XMP + L-glutamine + ATP + H2O = GMP + L-glutamate + AMP + diphosphate + 2 H(+). Its pathway is purine metabolism; GMP biosynthesis; GMP from XMP (L-Gln route): step 1/1. Functionally, catalyzes the synthesis of GMP from XMP. The polypeptide is GMP synthase [glutamine-hydrolyzing] (Spiroplasma kunkelii).